The sequence spans 121 residues: Surface glycoprotein CD59 homolog (121 aa).

Positions methionine 1–serine 19 are cleaved as a signal peptide. The UPAR/Ly6 domain occupies leucine 20–lysine 104. Intrachain disulfides connect cysteine 22-cysteine 45, cysteine 25-cysteine 32, cysteine 38-cysteine 58, cysteine 64-cysteine 82, and cysteine 83-cysteine 88. Residue asparagine 24 is glycosylated (N-linked (GlcNAc...) asparagine; by host). Asparagine 96 carries GPI-anchor amidated asparagine; by host lipidation. The propeptide at isoleucine 97–leucine 121 is removed in mature form.

Its subcellular location is the host cell membrane. In Saimiriine herpesvirus 2 (strain 11) (SaHV-2), this protein is Surface glycoprotein CD59 homolog (15).